A 131-amino-acid chain; its full sequence is Profilin-10 (131 aa).

Cysteine 13 and cysteine 115 are joined by a disulfide. The Involved in PIP2 interaction signature appears at alanine 81–threonine 97. Threonine 111 is modified (phosphothreonine).

The protein belongs to the profilin family. Occurs in many kinds of cells as a complex with monomeric actin in a 1:1 ratio. Phosphorylated by MAP kinases.

It localises to the cytoplasm. It is found in the cytoskeleton. Its function is as follows. Binds to actin and affects the structure of the cytoskeleton. At high concentrations, profilin prevents the polymerization of actin, whereas it enhances it at low concentrations. This Phleum pratense (Common timothy) protein is Profilin-10.